Consider the following 313-residue polypeptide: Uracil-DNA glycosylase (313 aa).

The segment at 35–68 (DEPMPKKCRRPAGPPKGFISTRGDTSPSSDNNHI) is disordered. A compositionally biased stretch (polar residues) spans 56–68 (RGDTSPSSDNNHI). The Proton acceptor role is filled by Asp153.

This sequence belongs to the uracil-DNA glycosylase (UDG) superfamily. UNG family.

It is found in the host nucleus. The catalysed reaction is Hydrolyzes single-stranded DNA or mismatched double-stranded DNA and polynucleotides, releasing free uracil.. In terms of biological role, excises uracil residues from the DNA which can arise as a result of misincorporation of dUMP residues by DNA polymerase or deamination of cytosines. Therefore may reduce deleterious uracil incorporation into the viral genome, particularly in terminally differentiated cells which lack DNA repair enzymes. The chain is Uracil-DNA glycosylase (MDV014) from Gallus gallus (Chicken).